Here is a 673-residue protein sequence, read N- to C-terminus: Pesticin receptor (673 aa).

Positions 1–22 (MKMTRLYPLALGGLLLPAIANA) are cleaved as a signal peptide. The TonB box signature appears at 30–37 (STLEVTAS). The region spanning 41–155 (SRSASANNVS…QGGIINIVTQ (115 aa)) is the TBDR plug domain. In terms of domain architecture, TBDR beta-barrel spans 160-672 (TPRGYIEGGV…TVGINTRIDF (513 aa)). The short motif at 657–673 (QVNMGRTVGINTRIDFF) is the TonB C-terminal box element.

Belongs to the TonB-dependent receptor family.

The protein resides in the cell outer membrane. Receptor for the bacteriocin pesticin and for the siderophore yersiniabactin. In Yersinia enterocolitica serotype O:8 / biotype 1B (strain NCTC 13174 / 8081), this protein is Pesticin receptor (fyuA).